The chain runs to 149 residues: Calmodulin, striated muscle (149 aa).

EF-hand domains lie at 8-43, 44-79, 81-116, and 117-149; these read EQIA…LGQN, PTEA…KMRD, DSEE…LGEK, and LTDE…MTEK. Asp21, Asp23, Asp25, Cys27, Glu32, Asp57, Asp59, Ser61, Thr63, Glu68, Asp94, Asp96, Asn98, Tyr100, and Glu105 together coordinate Ca(2+). Position 116 is an N6,N6,N6-trimethyllysine (Lys116). Ca(2+) contacts are provided by Asp130, Asn132, Asp134, Gln136, and Glu141.

Belongs to the calmodulin family.

The polypeptide is Calmodulin, striated muscle (CCM1) (Gallus gallus (Chicken)).